Reading from the N-terminus, the 503-residue chain is Cytochrome P450 3A15 (503 aa).

Cys442 lines the heme pocket.

Belongs to the cytochrome P450 family. Heme is required as a cofactor.

It localises to the endoplasmic reticulum membrane. The protein resides in the microsome membrane. The enzyme catalyses an organic molecule + reduced [NADPH--hemoprotein reductase] + O2 = an alcohol + oxidized [NADPH--hemoprotein reductase] + H2O + H(+). Functionally, cytochromes P450 are a group of heme-thiolate monooxygenases. In liver microsomes, this enzyme is involved in an NADPH-dependent electron transport pathway. It oxidizes a variety of structurally unrelated compounds, including steroids, fatty acids, and xenobiotics. The polypeptide is Cytochrome P450 3A15 (CYP3A15) (Cavia porcellus (Guinea pig)).